The following is a 482-amino-acid chain: Serine carboxypeptidase-like 36 (482 aa).

Positions 1–25 (MGKRQDWSVTACIFLFLSLASQIHC) are cleaved as a signal peptide. 3 disulfide bridges follow: Cys-119-Cys-363, Cys-275-Cys-286, and Cys-310-Cys-331. Ser-210 is a catalytic residue. N-linked (GlcNAc...) asparagine glycosylation is present at Asn-228. N-linked (GlcNAc...) asparagine glycosylation is found at Asn-312 and Asn-352. Asp-402 is a catalytic residue. N-linked (GlcNAc...) asparagine glycans are attached at residues Asn-418 and Asn-444. Residue His-455 is part of the active site.

The protein belongs to the peptidase S10 family. As to expression, expressed in seedlings, flowers and siliques.

It is found in the secreted. Functionally, probable carboxypeptidase. The polypeptide is Serine carboxypeptidase-like 36 (SCPL36) (Arabidopsis thaliana (Mouse-ear cress)).